Consider the following 55-residue polypeptide: MVKGTTSMGGFTRKHVHIRCRRCGKNSYHKRHHRCSSCGFPDAKIRKYSWVKWYT.

The Zn(2+) site is built by C20, C23, C35, and C38. A C4-type zinc finger spans residues 20–38 (CRRCGKNSYHKRHHRCSSC).

This sequence belongs to the eukaryotic ribosomal protein eL37 family. Zn(2+) is required as a cofactor.

Functionally, binds to the 23S rRNA. This Cenarchaeum symbiosum (strain A) protein is Large ribosomal subunit protein eL37.